Reading from the N-terminus, the 494-residue chain is UDP-N-acetylmuramoyl-L-alanyl-D-glutamate--2,6-diaminopimelate ligase (494 aa).

Serine 32 serves as a coordination point for UDP-N-acetyl-alpha-D-muramoyl-L-alanyl-D-glutamate. 112 to 118 (GTNGKTT) contacts ATP. UDP-N-acetyl-alpha-D-muramoyl-L-alanyl-D-glutamate contacts are provided by residues asparagine 153, 154–155 (TT), serine 181, and arginine 189. An N6-carboxylysine modification is found at lysine 221. Meso-2,6-diaminopimelate contacts are provided by residues arginine 383, 407-410 (DNPR), glycine 459, and glutamate 463. The short motif at 407 to 410 (DNPR) is the Meso-diaminopimelate recognition motif element.

The protein belongs to the MurCDEF family. MurE subfamily. It depends on Mg(2+) as a cofactor. Carboxylation is probably crucial for Mg(2+) binding and, consequently, for the gamma-phosphate positioning of ATP.

The protein localises to the cytoplasm. The catalysed reaction is UDP-N-acetyl-alpha-D-muramoyl-L-alanyl-D-glutamate + meso-2,6-diaminopimelate + ATP = UDP-N-acetyl-alpha-D-muramoyl-L-alanyl-gamma-D-glutamyl-meso-2,6-diaminopimelate + ADP + phosphate + H(+). It participates in cell wall biogenesis; peptidoglycan biosynthesis. Catalyzes the addition of meso-diaminopimelic acid to the nucleotide precursor UDP-N-acetylmuramoyl-L-alanyl-D-glutamate (UMAG) in the biosynthesis of bacterial cell-wall peptidoglycan. This is UDP-N-acetylmuramoyl-L-alanyl-D-glutamate--2,6-diaminopimelate ligase from Solibacter usitatus (strain Ellin6076).